Here is a 608-residue protein sequence, read N- to C-terminus: uncharacterized protein (608 aa).

The chain crosses the membrane as a helical span at residues Leu-4–Asp-24.

This sequence to M.jannaschii MJ1394 and A.fulgidus AF2028.

Its subcellular location is the membrane. This is an uncharacterized protein from Methanocaldococcus jannaschii (strain ATCC 43067 / DSM 2661 / JAL-1 / JCM 10045 / NBRC 100440) (Methanococcus jannaschii).